We begin with the raw amino-acid sequence, 66 residues long: Phylloseptin-S6 (66 aa).

A signal peptide spans 1-22; the sequence is MAFLKKSLFLVLFLGLVSLSIC. A propeptide spanning residues 23–46 is cleaved from the precursor; it reads EEEKRETEEEEHDQEEDDKSEEKR. Positions 25–44 are disordered; sequence EKRETEEEEHDQEEDDKSEE. Residues 30-41 show a composition bias toward acidic residues; that stretch reads EEEEHDQEEDDK. Leucine amide is present on L65.

This sequence belongs to the frog skin active peptide (FSAP) family. Phylloseptin subfamily. As to expression, expressed by the skin glands.

Its subcellular location is the secreted. It is found in the target cell membrane. Its function is as follows. Antimicrobial peptide with high activity against Gram-positive bacteria, low activity against Gram-negative bacteria, and moderate activity against fungi. Acts by causing bacterial membrane disruption inducing leakage of the intracellular content followed by cell death. It adopts an alpha-helical amphipathic structure in membrane environments. Also shows highly potent antiparasitic activity against Leishmania species. Shows moderate hemolytic activity on human erythrocytes. Is also active on human monocytes. The polypeptide is Phylloseptin-S6 (Phyllomedusa sauvagei (Sauvage's leaf frog)).